Here is a 238-residue protein sequence, read N- to C-terminus: Probable transcriptional regulatory protein llmg_0242 (238 aa).

Belongs to the TACO1 family. YeeN subfamily.

It localises to the cytoplasm. This is Probable transcriptional regulatory protein llmg_0242 from Lactococcus lactis subsp. cremoris (strain MG1363).